Reading from the N-terminus, the 483-residue chain is Zinc metalloproteinase/disintegrin (483 aa).

Positions 1–20 (MIQVLLVTVCLAVFPYQGSS) are cleaved as a signal peptide. Positions 21–190 (IILESGNVND…KASQLYLTPE (170 aa)) are excised as a propeptide. A Peptidase M12B domain is found at 197-395 (RYVKLAIVVD…YKPQCILNAP (199 aa)). Intrachain disulfides connect Cys-308–Cys-390, Cys-352–Cys-374, and Cys-354–Cys-357. Residue His-333 coordinates Zn(2+). Glu-334 is an active-site residue. Zn(2+) is bound by residues His-337 and His-343. A propeptide spanning residues 396-411 (LRTDTVSTPVSGNELL) is cleaved from the precursor. A Disintegrin domain is found at 403-483 (TPVSGNELLE…SDDCPRWNDL (81 aa)). 6 disulfide bridges follow: Cys-417–Cys-432, Cys-419–Cys-427, Cys-426–Cys-449, Cys-440–Cys-446, Cys-445–Cys-470, and Cys-458–Cys-477. A Cell attachment site motif is present at residues 462 to 464 (RGD).

Belongs to the venom metalloproteinase (M12B) family. P-II subfamily. P-IIa sub-subfamily. In terms of assembly, monomer. It depends on Zn(2+) as a cofactor. In terms of tissue distribution, expressed by the venom gland.

Its subcellular location is the secreted. Impairs hemostasis in the envenomed animal. Functionally, inhibits ADP- and collagen-induced human platelet aggregation with IC(50) of 123 and 135 nM, respectively. Inhibits sperm-egg binding in a concentration-dependent manner, but has no effect on the fusion of sperm-egg. The sequence is that of Zinc metalloproteinase/disintegrin from Protobothrops jerdonii (Jerdon's pitviper).